A 354-amino-acid polypeptide reads, in one-letter code: MTQRKIIHIDCDCFYAAIEMRDEPDLAGKPLAVGGSAERRGVIATCNYEARAYGVRSAMSSRHALKLCPDLTIVKPRMDAYKEASREIHTIFRDYTDLIEPLSLDEAFLDVSEAGHFSGSATRIAQDIRRRVSNQLHITVSAGVAPNKFLAKIASDWKKPNGLFVITPDQVEEFVASLPVTKLHGVGKVTADKLGRLGIVDCADLRSRSKLALVREFGSFGERLWSLAHGIDDRPVQNDSRRQSVSVENTYDTDLPDLAACLEKLPDLLETLSGRMARMEGQYRPGKPFVKVKFHDFTQTTLEQSGAGRDLGSYEQLLAQAFARGGKPVRLLGIGVRLHDLRAAHEQLELFSRQ.

One can recognise a UmuC domain in the interval 6-187; the sequence is IIHIDCDCFY…LPVTKLHGVG (182 aa). 2 residues coordinate Mg(2+): Asp10 and Asp105. Residue Glu106 is part of the active site.

It belongs to the DNA polymerase type-Y family. In terms of assembly, monomer. The cofactor is Mg(2+).

Its subcellular location is the cytoplasm. It carries out the reaction DNA(n) + a 2'-deoxyribonucleoside 5'-triphosphate = DNA(n+1) + diphosphate. In terms of biological role, poorly processive, error-prone DNA polymerase involved in untargeted mutagenesis. Copies undamaged DNA at stalled replication forks, which arise in vivo from mismatched or misaligned primer ends. These misaligned primers can be extended by PolIV. Exhibits no 3'-5' exonuclease (proofreading) activity. May be involved in translesional synthesis, in conjunction with the beta clamp from PolIII. The sequence is that of DNA polymerase IV from Pseudomonas syringae pv. syringae (strain B728a).